The following is a 144-amino-acid chain: Ribosomal RNA large subunit methyltransferase H (144 aa).

Residues Gly92 and 111–116 (LSPMTF) contribute to the S-adenosyl-L-methionine site.

It belongs to the RNA methyltransferase RlmH family. In terms of assembly, homodimer.

Its subcellular location is the cytoplasm. It catalyses the reaction pseudouridine(1915) in 23S rRNA + S-adenosyl-L-methionine = N(3)-methylpseudouridine(1915) in 23S rRNA + S-adenosyl-L-homocysteine + H(+). Functionally, specifically methylates the pseudouridine at position 1915 (m3Psi1915) in 23S rRNA. This Synechococcus sp. (strain CC9311) protein is Ribosomal RNA large subunit methyltransferase H.